The following is an 82-amino-acid chain: Small ribosomal subunit protein bS16 (82 aa).

Belongs to the bacterial ribosomal protein bS16 family.

This Rippkaea orientalis (strain PCC 8801 / RF-1) (Cyanothece sp. (strain PCC 8801)) protein is Small ribosomal subunit protein bS16.